Consider the following 174-residue polypeptide: Gamma-crystallin C (174 aa).

Beta/gamma crystallin 'Greek key' domains lie at 2–40 and 41–83; these read GKIT…RVDS and GCWM…CLIP. The residue at position 23 (Cys-23) is an S-methylcysteine. A connecting peptide region spans residues 84–87; that stretch reads QTSS. 2 Beta/gamma crystallin 'Greek key' domains span residues 88-128 and 129-171; these read HRLR…HVLE and GCWV…RRVV.

Belongs to the beta/gamma-crystallin family. In terms of assembly, monomer.

Its function is as follows. Crystallins are the dominant structural components of the vertebrate eye lens. The polypeptide is Gamma-crystallin C (CRYGC) (Canis lupus familiaris (Dog)).